The sequence spans 424 residues: Adenylosuccinate synthetase (424 aa).

GTP-binding positions include 12-18 (GDEGKGK) and 40-42 (GHT). Asp13 (proton acceptor) is an active-site residue. The Mg(2+) site is built by Asp13 and Gly40. Residues 13-16 (DEGK), 38-41 (NAGH), Thr130, Arg144, Asn220, Thr235, and Arg299 contribute to the IMP site. Catalysis depends on His41, which acts as the Proton donor. 295-301 (VTTGRRR) provides a ligand contact to substrate. GTP-binding positions include Arg301, 327–329 (KLD), and 412–414 (GTG).

The protein belongs to the adenylosuccinate synthetase family. As to quaternary structure, homodimer. Mg(2+) is required as a cofactor.

Its subcellular location is the cytoplasm. It catalyses the reaction IMP + L-aspartate + GTP = N(6)-(1,2-dicarboxyethyl)-AMP + GDP + phosphate + 2 H(+). Its pathway is purine metabolism; AMP biosynthesis via de novo pathway; AMP from IMP: step 1/2. Functionally, plays an important role in the de novo pathway and in the salvage pathway of purine nucleotide biosynthesis. Catalyzes the first committed step in the biosynthesis of AMP from IMP. The polypeptide is Adenylosuccinate synthetase (Neosartorya fischeri (strain ATCC 1020 / DSM 3700 / CBS 544.65 / FGSC A1164 / JCM 1740 / NRRL 181 / WB 181) (Aspergillus fischerianus)).